Reading from the N-terminus, the 865-residue chain is Envelope glycoprotein B (865 aa).

The signal sequence occupies residues 1–21 (MHYFRRNCIFFLIVILYGTNS). The Virion surface segment spans residues 22–731 (SPSTQNVTSR…SGVSAFMSNP (710 aa)). Asparagine 27 carries an N-linked (GlcNAc...) asparagine; by host glycan. Cystine bridges form between cysteine 49–cysteine 530, cysteine 66–cysteine 486, cysteine 140–cysteine 204, cysteine 298–cysteine 346, and cysteine 553–cysteine 590. The involved in fusion and/or binding to host membrane stretch occupies residues 106 to 112 (TWTGTTY). A glycan (N-linked (GlcNAc...) asparagine; by host) is linked at asparagine 184. The tract at residues 191 to 198 (GSPWIYRT) is involved in fusion and/or binding to host membrane. N-linked (GlcNAc...) asparagine; by host glycosylation is found at asparagine 332, asparagine 364, asparagine 406, and asparagine 425. An N-linked (GlcNAc...) asparagine; by host glycan is attached at asparagine 631. Hydrophobic membrane proximal region stretches follow at residues 676–729 (INKV…AFMS) and 683–729 (DTNY…AFMS). Residues 732–752 (FGALAIGLIIIAGLVAAFLAY) traverse the membrane as a helical segment. Residues 753 to 865 (RYVNKLKSNP…TYSDSEDDAV (113 aa)) lie on the Intravirion side of the membrane. Positions 809-812 (YMAL) match the Golgi targeting motif. Residues 843 to 865 (IKNSNPKYDKLPTTYSDSEDDAV) are disordered. The Internalization motif signature appears at 850–853 (YDKL).

It belongs to the herpesviridae glycoprotein B family. Homotrimer; disulfide-linked. Binds to heparan sulfate proteoglycans. Interacts with gH/gL heterodimer. Post-translationally, a proteolytic cleavage by host furin generates two subunits that remain linked by disulfide bonds.

The protein resides in the virion membrane. Its subcellular location is the host cell membrane. It localises to the host endosome membrane. It is found in the host Golgi apparatus membrane. Its function is as follows. Envelope glycoprotein that forms spikes at the surface of virion envelope. Essential for the initial attachment to heparan sulfate moieties of the host cell surface proteoglycans. Involved in fusion of viral and cellular membranes leading to virus entry into the host cell. Following initial binding to its host receptors, membrane fusion is mediated by the fusion machinery composed at least of gB and the heterodimer gH/gL. May be involved in the fusion between the virion envelope and the outer nuclear membrane during virion egress. The polypeptide is Envelope glycoprotein B (Gallid herpesvirus 2 (strain Chicken/Md5/ATCC VR-987) (GaHV-2)).